The sequence spans 1257 residues: Period circadian protein homolog 2 (1257 aa).

A disordered region spans residues 1 to 60 (MNGYVDFSPSPTSPTKEPGAPQPTQAVLQEDVDMSSGSSGNENCSTGRDSQGSDCDDNGK). A compositionally biased stretch (polar residues) spans 35 to 53 (SSGSSGNENCSTGRDSQGS). The Nuclear export signal 1 signature appears at 109–118 (LIRTLKELKV). In terms of domain architecture, PAS 1 spans 179 to 246 (ITSEYIVKNA…FHSYTTPYKL (68 aa)). The LXXLL signature appears at 306 to 310 (LCCLL). Residues 319–385 (YEAPRIPPEK…MLAIHKKILQ (67 aa)) form the PAS 2 domain. The PAC domain occupies 393 to 436 (YSPIRFRTRNGEYITLDTSWSSFINPWSRKISFIIGRHKVRVGP). A Nuclear export signal 2 motif is present at residues 460-469 (LTEQIHRLLM). 2 disordered regions span residues 471-565 (PVPH…GASL) and 617-638 (PSRK…PSKV). The tract at residues 478 to 482 (SGYGS) is important for protein stability. Residues 493-504 (MSQTSSSDSNGQ) show a composition bias toward polar residues. Residues 510-709 (RRSGIFKTSG…GAAGGLSQEK (200 aa)) are CSNK1E binding domain. Residues Ser-525, Ser-528, Ser-531, Ser-538, and Ser-544 each carry the phosphoserine modification. Position 554 is a phosphothreonine (Thr-554). Phosphoserine is present on residues Ser-659, Ser-693, Ser-697, Ser-706, Ser-758, and Ser-763. A disordered region spans residues 757-832 (RSRAQASDRG…SDTSQSSCPS (76 aa)). The short motif at 778–794 (KKTGKNRKLKSKRVKTR) is the Nuclear localization signal element. Basic residues predominate over residues 779–792 (KTGKNRKLKSKRVK). Over residues 821–832 (SPSDTSQSSCPS) the composition is skewed to low complexity. Residue Thr-858 is modified to Phosphothreonine. The interaction with PPARG stretch occupies residues 882-1067 (EFAVQPLPFA…DLCSATGSAL (186 aa)). Phosphoserine is present on Ser-939. At Thr-964 the chain carries Phosphothreonine. The residue at position 971 (Ser-971) is a Phosphoserine. A Nuclear export signal 3 motif is present at residues 983-990 (LQLNLLQL). The segment at 994 to 1044 (PEGSTGAAGTLGTTGTAASGLDCTSGTSRDRQPKAPPTCNEPSDTQNSDAI) is disordered. A compositionally biased stretch (low complexity) spans 996 to 1014 (GSTGAAGTLGTTGTAASGL). A compositionally biased stretch (polar residues) spans 1033-1044 (NEPSDTQNSDAI). The LXXLL signature appears at 1051–1055 (LNLLL). Residues 1070–1092 (SGASATSDSLGSSSLGFGTSQSG) are compositionally biased toward low complexity. A disordered region spans residues 1070-1115 (SGASATSDSLGSSSLGFGTSQSGAGSSDTSHTSKYFGSIDSSENNH). A compositionally biased stretch (polar residues) spans 1093-1111 (AGSSDTSHTSKYFGSIDSS). Phosphoserine is present on Ser-1126. The segment at 1157 to 1257 (SRDLQAVLKE…LTGPRIEAQT (101 aa)) is CRY binding domain. Residues 1224–1257 (PYEEDSPSPGLCDTSEAKEEEGEQLTGPRIEAQT) are disordered.

In terms of assembly, homodimer. Component of the circadian core oscillator, which includes the CRY proteins, CLOCK or NPAS2, BMAL1 or BMAL2, CSNK1D and/or CSNK1E, TIMELESS, and the PER proteins. Interacts with CLOCK-BMAL1 (off DNA). Interacts with BMAL2. Interacts directly with PER1 and PER3, and through a C-terminal domain, with CRY1 and CRY2. Interacts (via PAS 2 domain) with TIMELESS. Interacts with NFIL3. Different large complexes have been identified with different repressive functions. The core of PER complexes is composed of at least PER1, PER2, PER3, CRY1, CRY2, CSNK1D and/or CSNK1E. The large PER complex involved in the repression of transcriptional termination is composed of at least PER2, CDK9, DDX5, DHX9, NCBP1 and POLR2A (active). The large PER complex involved in the histone deacetylation is composed of at least HDAC1, PER2, SFPQ and SIN3A. The large PER complex involved in the histone methylation is composed of at least PER2, CBX3, TRIM28, SUV39H1 and/or SUV39H2; CBX3 mediates the formation of the complex. Interacts with SETX; the interaction inhibits termination of circadian target genes. Interacts with the nuclear receptors HNF4A, NR1D1, NR4A2, RORA, PPARA, PPARG and THRA; the interaction with at least PPARG is ligand dependent. Interacts with PML. Interacts (phosphorylated) with BTRC and FBXW11; the interactions trigger proteasomal degradation. Interacts with NONO and SFPQ. Interacts with CAVIN3. Interacts with MAGEL2. Interacts with MAP1LC3B. Interacts with HNF4A. In terms of processing, acetylated. Deacetylated by SIRT1, resulting in decreased protein stability. Deacetylated by SIRT6, preventing its degradation by the proteasome, resulting in increased protein stability. Phosphorylated by CSNK1E and CSNK1D. Phosphorylation results in PER2 protein degradation. May be dephosphorylated by PP1. Post-translationally, ubiquitinated, leading to its proteasomal degradation. Ubiquitination may be inhibited by CRY1. As to expression, in the brain, high expression in SCN during the subjective day. Constitutive expression in the cornu ammonis and in the dentate gyrus of the hippocampus. Also expressed in the piriform cortex and the glomeruli of the olfactory bulb, and at a lower extent in the cerebral cortex. Not expressed in the pars tuberalis and the Purkinje neurons. Also expressed in adipose tissue (white and brown), heart, kidney, bladder, lumbar spinal cord, skeletal muscle, spleen, lung, pancreas and liver with highest levels in skeletal muscle and liver and lowest levels in spleen.

Its subcellular location is the nucleus. It localises to the cytoplasm. The protein localises to the perinuclear region. Its function is as follows. Transcriptional repressor which forms a core component of the circadian clock. The circadian clock, an internal time-keeping system, regulates various physiological processes through the generation of approximately 24 hour circadian rhythms in gene expression, which are translated into rhythms in metabolism and behavior. It is derived from the Latin roots 'circa' (about) and 'diem' (day) and acts as an important regulator of a wide array of physiological functions including metabolism, sleep, body temperature, blood pressure, endocrine, immune, cardiovascular, and renal function. Consists of two major components: the central clock, residing in the suprachiasmatic nucleus (SCN) of the brain, and the peripheral clocks that are present in nearly every tissue and organ system. Both the central and peripheral clocks can be reset by environmental cues, also known as Zeitgebers (German for 'timegivers'). The predominant Zeitgeber for the central clock is light, which is sensed by retina and signals directly to the SCN. The central clock entrains the peripheral clocks through neuronal and hormonal signals, body temperature and feeding-related cues, aligning all clocks with the external light/dark cycle. Circadian rhythms allow an organism to achieve temporal homeostasis with its environment at the molecular level by regulating gene expression to create a peak of protein expression once every 24 hours to control when a particular physiological process is most active with respect to the solar day. Transcription and translation of core clock components (CLOCK, NPAS2, BMAL1, BMAL2, PER1, PER2, PER3, CRY1 and CRY2) plays a critical role in rhythm generation, whereas delays imposed by post-translational modifications (PTMs) are important for determining the period (tau) of the rhythms (tau refers to the period of a rhythm and is the length, in time, of one complete cycle). A diurnal rhythm is synchronized with the day/night cycle, while the ultradian and infradian rhythms have a period shorter and longer than 24 hours, respectively. Disruptions in the circadian rhythms contribute to the pathology of cardiovascular diseases, cancer, metabolic syndrome and aging. A transcription/translation feedback loop (TTFL) forms the core of the molecular circadian clock mechanism. Transcription factors, CLOCK or NPAS2 and BMAL1 or BMAL2, form the positive limb of the feedback loop, act in the form of a heterodimer and activate the transcription of core clock genes and clock-controlled genes (involved in key metabolic processes), harboring E-box elements (5'-CACGTG-3') within their promoters. The core clock genes: PER1/2/3 and CRY1/2 which are transcriptional repressors form the negative limb of the feedback loop and interact with the CLOCK|NPAS2-BMAL1|BMAL2 heterodimer inhibiting its activity and thereby negatively regulating their own expression. This heterodimer also activates nuclear receptors NR1D1/2 and RORA/B/G, which form a second feedback loop and which activate and repress BMAL1 transcription, respectively. PER1 and PER2 proteins transport CRY1 and CRY2 into the nucleus with appropriate circadian timing, but also contribute directly to repression of clock-controlled target genes through interaction with several classes of RNA-binding proteins, helicases and others transcriptional repressors. PER appears to regulate circadian control of transcription by at least three different modes. First, interacts directly with the CLOCK-BMAL1 at the tail end of the nascent transcript peak to recruit complexes containing the SIN3-HDAC that remodel chromatin to repress transcription. Second, brings H3K9 methyltransferases such as SUV39H1 and SUV39H2 to the E-box elements of the circadian target genes, like PER2 itself or PER1. The recruitment of each repressive modifier to the DNA seems to be very precisely temporally orchestrated by the large PER complex, the deacetylases acting before than the methyltransferases. Additionally, large PER complexes are also recruited to the target genes 3' termination site through interactions with RNA-binding proteins and helicases that may play a role in transcription termination to regulate transcription independently of CLOCK-BMAL1 interactions. Recruitment of large PER complexes to the elongating polymerase at PER and CRY termination sites inhibited SETX action, impeding RNA polymerase II release and thereby repressing transcriptional reinitiation. May propagate clock information to metabolic pathways via the interaction with nuclear receptors. Coactivator of PPARA and corepressor of NR1D1, binds rhythmically at the promoter of nuclear receptors target genes like BMAL1 or G6PC1. Directly and specifically represses PPARG proadipogenic activity by blocking PPARG recruitment to target promoters and thereby transcriptional activation. Required for fatty acid and lipid metabolism, is involved as well in the regulation of circulating insulin levels. Plays an important role in the maintenance of cardiovascular functions through the regulation of NO and vasodilatatory prostaglandins production in aortas. Controls circadian glutamate uptake in synaptic vesicles through the regulation of VGLUT1 expression. May also be involved in the regulation of inflammatory processes. Represses the CLOCK-BMAL1 induced transcription of BHLHE40/DEC1 and ATF4. Negatively regulates the formation of the TIMELESS-CRY1 complex by competing with TIMELESS for binding to CRY1. This is Period circadian protein homolog 2 (Per2) from Mus musculus (Mouse).